A 476-amino-acid chain; its full sequence is Cardiolipin synthase (476 aa).

The next 2 membrane-spanning stretches (helical) occupy residues 2–22 and 31–51; these read HLLI…IIFI and WAWI…YILF. PLD phosphodiesterase domains follow at residues 207 to 234 and 389 to 416; these read INYR…GDEY and EKGF…DIRS. Residues His-212, Lys-214, Asp-219, His-394, Lys-396, and Asp-401 contribute to the active site.

The protein belongs to the phospholipase D family. Cardiolipin synthase subfamily.

It localises to the cell membrane. The catalysed reaction is 2 a 1,2-diacyl-sn-glycero-3-phospho-(1'-sn-glycerol) = a cardiolipin + glycerol. In terms of biological role, catalyzes the reversible phosphatidyl group transfer from one phosphatidylglycerol molecule to another to form cardiolipin (CL) (diphosphatidylglycerol) and glycerol. This chain is Cardiolipin synthase (cls), found in Clostridium perfringens (strain SM101 / Type A).